A 603-amino-acid chain; its full sequence is Autophagy-related protein 13a (603 aa).

Ser-248 carries the phosphoserine modification. Disordered stretches follow at residues 258–477 (PSPG…DDLD) and 498–518 (SHSL…PLGR). Residues 301-315 (ATPNQSFSPAQSHQL) are compositionally biased toward polar residues. The span at 320-331 (HDFHWSRTDAFG) shows a compositional bias: basic and acidic residues. 2 stretches are compositionally biased toward polar residues: residues 371–386 (IPSS…SNFS) and 419–437 (SSRS…PTQK). The span at 453 to 473 (LSSSDSPRFAFSRSPSRLSSQ) shows a compositional bias: low complexity.

Belongs to the ATG13 family. Plant subfamily. In terms of assembly, interacts with ATG1A. Interacts with ATG11 and ATG101. Post-translationally, phosphorylated during nutrient starvation. Dephosphorylated in nutrient-rich conditions.

It is found in the cytoplasmic vesicle. The protein localises to the autophagosome. In terms of biological role, involved in autophagy in a nutritional condition dependent manner. The ATG1-ATG13 protein kinase complex regulates downstream events required for autophagosome enclosure and/or vacuolar delivery. Becomes a target of autophagy under nutrient starvation. Connects autophagy to plant nutritional status. The protein is Autophagy-related protein 13a of Arabidopsis thaliana (Mouse-ear cress).